Here is a 286-residue protein sequence, read N- to C-terminus: Formamidopyrimidine-DNA glycosylase (286 aa).

Pro2 functions as the Schiff-base intermediate with DNA in the catalytic mechanism. Glu3 functions as the Proton donor in the catalytic mechanism. Lys61 acts as the Proton donor; for beta-elimination activity in catalysis. Residues His103, Arg122, and Arg164 each coordinate DNA. The segment at 250–284 (NAYAQTGEPCGRCGTLIIRESFMNRGSHYCPNCQK) adopts an FPG-type zinc-finger fold. Arg274 functions as the Proton donor; for delta-elimination activity in the catalytic mechanism.

The protein belongs to the FPG family. In terms of assembly, monomer. Zn(2+) is required as a cofactor.

The catalysed reaction is Hydrolysis of DNA containing ring-opened 7-methylguanine residues, releasing 2,6-diamino-4-hydroxy-5-(N-methyl)formamidopyrimidine.. It carries out the reaction 2'-deoxyribonucleotide-(2'-deoxyribose 5'-phosphate)-2'-deoxyribonucleotide-DNA = a 3'-end 2'-deoxyribonucleotide-(2,3-dehydro-2,3-deoxyribose 5'-phosphate)-DNA + a 5'-end 5'-phospho-2'-deoxyribonucleoside-DNA + H(+). Functionally, involved in base excision repair of DNA damaged by oxidation or by mutagenic agents. Acts as a DNA glycosylase that recognizes and removes damaged bases. Has a preference for oxidized purines, such as 7,8-dihydro-8-oxoguanine (8-oxoG). Has AP (apurinic/apyrimidinic) lyase activity and introduces nicks in the DNA strand. Cleaves the DNA backbone by beta-delta elimination to generate a single-strand break at the site of the removed base with both 3'- and 5'-phosphates. In Corynebacterium glutamicum (strain ATCC 13032 / DSM 20300 / JCM 1318 / BCRC 11384 / CCUG 27702 / LMG 3730 / NBRC 12168 / NCIMB 10025 / NRRL B-2784 / 534), this protein is Formamidopyrimidine-DNA glycosylase.